Reading from the N-terminus, the 517-residue chain is T-box transcription factor TBX5 (517 aa).

The interval 1–46 (MADADEGFGLARTPLEPDSKDRSCDSKPESALGAPSKSPSSPQAAF) is disordered. Basic and acidic residues predominate over residues 15 to 28 (LEPDSKDRSCDSKP). Residues 34-45 (APSKSPSSPQAA) are compositionally biased toward low complexity. Positions 58–238 (LHERELWLKF…NNPFAKGFRG (181 aa)) form a DNA-binding region, T-box. Disordered stretches follow at residues 270-313 (HSPF…YPLA) and 331-369 (SSTE…SYRT). Over residues 271–300 (SPFSSETRALSTSSNLGSQYQCENGVSGPS) the composition is skewed to polar residues. At Lys-338 the chain carries N6-acetyllysine. The span at 357–369 (YPQQQGLSTSYRT) shows a compositional bias: polar residues.

In terms of assembly, monomer. Homodimer (via the T-box); binds DNA as homodimer. Interacts (via the T-box) with NKX2-5 (via the homeobox); this complex binds DNA. Interacts with GATA4. Interacts with KAT2A and KAT2B. Post-translationally, acetylation at Lys-338 by KAT2A and KAT2B promotes nuclear retention.

The protein resides in the nucleus. It is found in the cytoplasm. DNA-binding protein that regulates the transcription of several genes and is involved in heart development and limb pattern formation. Binds to the core DNA motif of NPPA promoter. This is T-box transcription factor TBX5 (Tbx5) from Rattus norvegicus (Rat).